The chain runs to 255 residues: Sec-independent protein translocase protein TatC (255 aa).

The next 7 membrane-spanning stretches (helical) occupy residues 28–48 (VAAVLLIFAALFYFAQDIYAL), 56–76 (YLPEGATMIATGVASPFLAPF), 80–100 (LMISLFLAMPVVLHQVWGFIA), 121–141 (LFYAGMAFAYFVVFPIMFGFF), 165–185 (LFFAFGVAFEVPVATFLLIWV), 195–212 (NSRPYVIVGCFVVGMVLT), and 216–236 (VFSQTLLAVPMWLLFEIGVFF).

Belongs to the TatC family. In terms of assembly, the Tat system comprises two distinct complexes: a TatABC complex, containing multiple copies of TatA, TatB and TatC subunits, and a separate TatA complex, containing only TatA subunits. Substrates initially bind to the TatABC complex, which probably triggers association of the separate TatA complex to form the active translocon.

Its subcellular location is the cell membrane. Functionally, part of the twin-arginine translocation (Tat) system that transports large folded proteins containing a characteristic twin-arginine motif in their signal peptide across membranes. Together with TatB, TatC is part of a receptor directly interacting with Tat signal peptides. The sequence is that of Sec-independent protein translocase protein TatC from Azotobacter chroococcum mcd 1.